Consider the following 339-residue polypeptide: Anthranilate phosphoribosyltransferase (339 aa).

5-phospho-alpha-D-ribose 1-diphosphate contacts are provided by residues glycine 81, 84–85, serine 89, 91–94, 109–117, and alanine 121; these read GD, NVSS, and KHGNRALSS. Glycine 81 serves as a coordination point for anthranilate. Serine 93 contributes to the Mg(2+) binding site. Asparagine 112 contributes to the anthranilate binding site. Arginine 167 contacts anthranilate. Mg(2+)-binding residues include aspartate 225 and glutamate 226.

This sequence belongs to the anthranilate phosphoribosyltransferase family. As to quaternary structure, homodimer. Mg(2+) serves as cofactor.

The enzyme catalyses N-(5-phospho-beta-D-ribosyl)anthranilate + diphosphate = 5-phospho-alpha-D-ribose 1-diphosphate + anthranilate. It functions in the pathway amino-acid biosynthesis; L-tryptophan biosynthesis; L-tryptophan from chorismate: step 2/5. In terms of biological role, catalyzes the transfer of the phosphoribosyl group of 5-phosphorylribose-1-pyrophosphate (PRPP) to anthranilate to yield N-(5'-phosphoribosyl)-anthranilate (PRA). This chain is Anthranilate phosphoribosyltransferase, found in Brucella canis (strain ATCC 23365 / NCTC 10854 / RM-666).